The chain runs to 824 residues: Disintegrin and metalloproteinase domain-containing protein 17 (824 aa).

The N-terminal stretch at 1-17 is a signal peptide; that stretch reads MRQSLLFLTSVVPFVLA. A propeptide spanning residues 18 to 214 is cleaved from the precursor; the sequence is PRPPDDPGFG…PEELVHRVKR (197 aa). N-linked (GlcNAc...) asparagine glycans are attached at residues Asn103, Asn157, and Asn174. A Cysteine switch motif is present at residues 182 to 189; the sequence is KVCGYLKV. Cys184 is a Zn(2+) binding site. Residues 215-671 lie on the Extracellular side of the membrane; that stretch reads RADPDPMKNT…NTFGKFLADN (457 aa). Residues 223-474 enclose the Peptidase M12B domain; it reads NTCKLLVVAD…KAQECFQERS (252 aa). 3 disulfides stabilise this stretch: Cys225/Cys333, Cys365/Cys469, and Cys423/Cys453. N-linked (GlcNAc...) asparagine glycosylation is present at Asn264. His405 is a binding site for Zn(2+). Glu406 is a catalytic residue. Residues His409 and His415 each coordinate Zn(2+). N-linked (GlcNAc...) asparagine glycans are attached at residues Asn452, Asn498, Asn539, and Asn551. Positions 475–563 constitute a Disintegrin domain; that stretch reads NKVCGNSRVD…ECPPPGNAED (89 aa). 4 disulfide bridges follow: Cys534–Cys555, Cys573–Cys582, Cys578–Cys591, and Cys593–Cys600. N-linked (GlcNAc...) asparagine glycosylation occurs at Asn594. The tract at residues 603–671 is crambin-like; it reads CCRDLSGRCV…NTFGKFLADN (69 aa). The helical transmembrane segment at 672-692 threads the bilayer; sequence IVGSVLVFSLIFWIPFSILVH. The Cytoplasmic portion of the chain corresponds to 693 to 824; that stretch reads CVDKKLDKQY…NRVDSKETEC (132 aa). Short sequence motifs (SH3-binding) lie at residues 731-738 and 741-748; these read PAPQTPGR and PAPVIPSA. The segment at 732-824 is disordered; that stretch reads APQTPGRLQP…NRVDSKETEC (93 aa). The residue at position 735 (Thr735) is a Phosphothreonine; by MAPK14. A compositionally biased stretch (low complexity) spans 741–752; it reads PAPVIPSAPAAP. At Thr761 the chain carries Phosphothreonine. Ser767 is modified (phosphoserine). 3 stretches are compositionally biased toward basic and acidic residues: residues 768–781, 791–807, and 815–824; these read TDSH…EKDP, SFED…EKAA, and NRVDSKETEC. 2 positions are modified to phosphoserine: Ser791 and Ser819.

Interacts with MAD2L1, MAPK14 and MUC1. Interacts with iRhom1/RHBDF1 and iRhom2/RHBDF2. Interacts with FRMD8 via its interaction with iRhom1/RHBDF1 and iRhom2/RHBDF2. Interacts with TSPAN8. It depends on Zn(2+) as a cofactor. In terms of processing, the precursor is cleaved by a furin endopeptidase. Phosphorylated. Stimulation by growth factor or phorbol 12-myristate 13-acetate induces phosphorylation of Ser-819 but decreases phosphorylation of Ser-791. Phosphorylation at Thr-735 by MAPK14 is required for ADAM17-mediated ectodomain shedding. Ubiquitously expressed. Expressed at highest levels in adult heart, placenta, skeletal muscle, pancreas, spleen, thymus, prostate, testes, ovary and small intestine, and in fetal brain, lung, liver and kidney. Expressed in natural killer cells (at protein level).

Its subcellular location is the cell membrane. The enzyme catalyses Narrow endopeptidase specificity. Cleaves Pro-Leu-Ala-Gln-Ala-|-Val-Arg-Ser-Ser-Ser in the membrane-bound, 26-kDa form of tumor necrosis factor alpha (TNFalpha). Similarly cleaves other membrane-anchored, cell-surface proteins to 'shed' the extracellular domains.. In terms of biological role, transmembrane metalloprotease which mediates the ectodomain shedding of a myriad of transmembrane proteins including adhesion proteins, growth factor precursors and cytokines important for inflammation and immunity. Cleaves the membrane-bound precursor of TNF-alpha to its mature soluble form. Responsible for the proteolytical release of soluble JAM3 from endothelial cells surface. Responsible for the proteolytic release of several other cell-surface proteins, including p75 TNF-receptor, interleukin 1 receptor type II, p55 TNF-receptor, transforming growth factor-alpha, L-selectin, growth hormone receptor, MUC1 and the amyloid precursor protein. Acts as an activator of Notch pathway by mediating cleavage of Notch, generating the membrane-associated intermediate fragment called Notch extracellular truncation (NEXT). Plays a role in the proteolytic processing of ACE2. Plays a role in hemostasis through shedding of GP1BA, the platelet glycoprotein Ib alpha chain. Mediates the proteolytic cleavage of LAG3, leading to release the secreted form of LAG3. Mediates the proteolytic cleavage of IL6R, leading to the release of secreted form of IL6R. Mediates the proteolytic cleavage and shedding of FCGR3A upon NK cell stimulation, a mechanism that allows for increased NK cell motility and detachment from opsonized target cells. Cleaves TREM2, resulting in shedding of the TREM2 ectodomain. The polypeptide is Disintegrin and metalloproteinase domain-containing protein 17 (Homo sapiens (Human)).